Reading from the N-terminus, the 201-residue chain is dCTP deaminase, dUMP-forming (201 aa).

DCTP is bound by residues 101–106, D119, 127–129, Q148, Y162, and Q174; these read KSSLGR and TLE. E129 acts as the Proton donor/acceptor in catalysis. The segment covering 166–183 has biased composition (polar residues); sequence EYSSRYQGQRGPTASRSF. The interval 166 to 201 is disordered; the sequence is EYSSRYQGQRGPTASRSFLNFHRTDVSGTEAGRSSS.

It belongs to the dCTP deaminase family. In terms of assembly, homotrimer.

The catalysed reaction is dCTP + 2 H2O = dUMP + NH4(+) + diphosphate. It participates in pyrimidine metabolism; dUMP biosynthesis; dUMP from dCTP: step 1/1. Functionally, bifunctional enzyme that catalyzes both the deamination of dCTP to dUTP and the hydrolysis of dUTP to dUMP without releasing the toxic dUTP intermediate. This Leifsonia xyli subsp. xyli (strain CTCB07) protein is dCTP deaminase, dUMP-forming.